The primary structure comprises 150 residues: SsrA-binding protein (150 aa).

The protein belongs to the SmpB family.

The protein localises to the cytoplasm. Functionally, required for rescue of stalled ribosomes mediated by trans-translation. Binds to transfer-messenger RNA (tmRNA), required for stable association of tmRNA with ribosomes. tmRNA and SmpB together mimic tRNA shape, replacing the anticodon stem-loop with SmpB. tmRNA is encoded by the ssrA gene; the 2 termini fold to resemble tRNA(Ala) and it encodes a 'tag peptide', a short internal open reading frame. During trans-translation Ala-aminoacylated tmRNA acts like a tRNA, entering the A-site of stalled ribosomes, displacing the stalled mRNA. The ribosome then switches to translate the ORF on the tmRNA; the nascent peptide is terminated with the 'tag peptide' encoded by the tmRNA and targeted for degradation. The ribosome is freed to recommence translation, which seems to be the essential function of trans-translation. This chain is SsrA-binding protein, found in Borrelia garinii subsp. bavariensis (strain ATCC BAA-2496 / DSM 23469 / PBi) (Borreliella bavariensis).